A 229-amino-acid chain; its full sequence is Ribonuclease 3 (229 aa).

The 123-residue stretch at 5 to 127 folds into the RNase III domain; it reads LSRLERKLGH…LIGAIYLDAG (123 aa). Glu40 lines the Mg(2+) pocket. The active site involves Asp44. Positions 113 and 116 each coordinate Mg(2+). The active site involves Glu116. Positions 154-224 constitute a DRBM domain; sequence DPKTRLQEFL…AAAALIALGV (71 aa).

Belongs to the ribonuclease III family. As to quaternary structure, homodimer. Requires Mg(2+) as cofactor.

It localises to the cytoplasm. It carries out the reaction Endonucleolytic cleavage to 5'-phosphomonoester.. Functionally, digests double-stranded RNA. Involved in the processing of primary rRNA transcript to yield the immediate precursors to the large and small rRNAs (23S and 16S). Processes some mRNAs, and tRNAs when they are encoded in the rRNA operon. Processes pre-crRNA and tracrRNA of type II CRISPR loci if present in the organism. This Ectopseudomonas mendocina (strain ymp) (Pseudomonas mendocina) protein is Ribonuclease 3.